The primary structure comprises 492 residues: Ketol-acid reductoisomerase (NADP(+)) (492 aa).

The KARI N-terminal Rossmann domain occupies 14–208 (LDQLGRCRFM…GGHKAGVLES (195 aa)). NADP(+) contacts are provided by residues 45–48 (CGAQ), Arg68, Arg76, Ser78, and 108–110 (DKQ). His132 is an active-site residue. Position 158 (Gly158) interacts with NADP(+). 2 KARI C-terminal knotted domains span residues 209-344 (SFVA…NAPK) and 345-485 (YDGK…MTDM). Mg(2+) contacts are provided by Asp217, Glu221, Glu389, and Glu393. Ser414 provides a ligand contact to substrate.

This sequence belongs to the ketol-acid reductoisomerase family. Requires Mg(2+) as cofactor.

It carries out the reaction (2R)-2,3-dihydroxy-3-methylbutanoate + NADP(+) = (2S)-2-acetolactate + NADPH + H(+). The enzyme catalyses (2R,3R)-2,3-dihydroxy-3-methylpentanoate + NADP(+) = (S)-2-ethyl-2-hydroxy-3-oxobutanoate + NADPH + H(+). It participates in amino-acid biosynthesis; L-isoleucine biosynthesis; L-isoleucine from 2-oxobutanoate: step 2/4. The protein operates within amino-acid biosynthesis; L-valine biosynthesis; L-valine from pyruvate: step 2/4. In terms of biological role, involved in the biosynthesis of branched-chain amino acids (BCAA). Catalyzes an alkyl-migration followed by a ketol-acid reduction of (S)-2-acetolactate (S2AL) to yield (R)-2,3-dihydroxy-isovalerate. In the isomerase reaction, S2AL is rearranged via a Mg-dependent methyl migration to produce 3-hydroxy-3-methyl-2-ketobutyrate (HMKB). In the reductase reaction, this 2-ketoacid undergoes a metal-dependent reduction by NADPH to yield (R)-2,3-dihydroxy-isovalerate. The polypeptide is Ketol-acid reductoisomerase (NADP(+)) (Haemophilus influenzae (strain 86-028NP)).